The chain runs to 255 residues: 4-hydroxy-tetrahydrodipicolinate reductase (255 aa).

Residues 9–14, 89–91, and 115–118 each bind NAD(+); these read GFKGKM, GTT, and APNF. Catalysis depends on His-145, which acts as the Proton donor/acceptor. His-146 lines the (S)-2,3,4,5-tetrahydrodipicolinate pocket. The active-site Proton donor is the Lys-149. Residue 155–156 participates in (S)-2,3,4,5-tetrahydrodipicolinate binding; it reads GT.

This sequence belongs to the DapB family.

It localises to the cytoplasm. It catalyses the reaction (S)-2,3,4,5-tetrahydrodipicolinate + NAD(+) + H2O = (2S,4S)-4-hydroxy-2,3,4,5-tetrahydrodipicolinate + NADH + H(+). The enzyme catalyses (S)-2,3,4,5-tetrahydrodipicolinate + NADP(+) + H2O = (2S,4S)-4-hydroxy-2,3,4,5-tetrahydrodipicolinate + NADPH + H(+). The protein operates within amino-acid biosynthesis; L-lysine biosynthesis via DAP pathway; (S)-tetrahydrodipicolinate from L-aspartate: step 4/4. In terms of biological role, catalyzes the conversion of 4-hydroxy-tetrahydrodipicolinate (HTPA) to tetrahydrodipicolinate. The protein is 4-hydroxy-tetrahydrodipicolinate reductase of Streptococcus suis (strain 98HAH33).